Here is a 154-residue protein sequence, read N- to C-terminus: MENEYDMKSIKEKGVDFEDLWFSSVSDEILDNPEDENGQPFTGLAYELYPNGQIIYFTKYKNGLAHGLTCEFYENGNKKSEKEYRYGQLHGISIIWFENGRKKSEQQYEHSILISEKNWDEEGNLLNKYEIDTDSPHFEILESRRETHINLGRE.

Probably interacts with cognate toxin YwqJ but not with other non-cognate LXG toxins. The interaction inhibits the toxic activity of YwqJ.

It is found in the cytoplasm. In terms of biological role, immunity component of one of 6 LXG toxin-immunity modules in this strain. They promote kin selection, mediate competition in biofilms, and drive spatial segregation of different strains, indicating that LXG toxins may help avoid warfare between strains in biofilms. Mediates intercellular competition during biofilm formation; disruption of the operon disadvantages the bacteria, but overexpression of the cognate immunity protein restores growth in competition with wild-type. In situ neutralizes the toxic effect of cognate toxin YqcG. Probably neutralizes the ability to inhibit growth of cognate toxin YwqJ. Probably does not have immunity protein activity on other LXG toxins. The chain is Immunity protein YwqK (ywqK) from Bacillus subtilis (strain 168).